A 520-amino-acid polypeptide reads, in one-letter code: Peptide chain release factor 3 (520 aa).

Residues 8 to 273 (EIRKTFAIIS…AYVDHAPMPS (266 aa)) form the tr-type G domain. Residues 17 to 24 (SHPDAGKT), 85 to 89 (DTPGH), and 139 to 142 (NKLD) each bind GTP.

This sequence belongs to the TRAFAC class translation factor GTPase superfamily. Classic translation factor GTPase family. PrfC subfamily.

It localises to the cytoplasm. Functionally, increases the formation of ribosomal termination complexes and stimulates activities of RF-1 and RF-2. It binds guanine nucleotides and has strong preference for UGA stop codons. It may interact directly with the ribosome. The stimulation of RF-1 and RF-2 is significantly reduced by GTP and GDP, but not by GMP. In Macrococcus caseolyticus (strain JCSC5402) (Macrococcoides caseolyticum), this protein is Peptide chain release factor 3.